The sequence spans 458 residues: Plant UBX domain-containing protein 2 (458 aa).

Positions 1–103 are disordered; sequence MDDVKDKLKG…APQDGFDPYG (103 aa). A compositionally biased stretch (polar residues) spans 44–54; it reads PIQNRFNSSQA. Pro residues predominate over residues 56 to 70; sequence NPTPRPKPNPNPLPE. Over residues 74-85 the composition is skewed to polar residues; the sequence is SSSDQKISGSTR. Residues 121-143 form a C2H2-type; atypical zinc finger; sequence FECPICKNPFTSEEEVSVHVESC. In terms of domain architecture, PUB spans 181–248; it reads SSIDVLLRLF…EIWAVMDVPS (68 aa). Residues 349–433 enclose the UBX domain; sequence KRYKRSMIRV…ELVPSALIRF (85 aa).

Interacts with CDC48A in vitro and co-fractionates with membrane-associated but not soluble CDC48A in vivo.

It is found in the membrane. Facilitates the interaction of SYP31 and CDC48A, thereby regulating an CDC48A membrane-associated function. Appears to act as a negative regulator mediating the powdery mildew-plant interaction. The protein is Plant UBX domain-containing protein 2 of Arabidopsis thaliana (Mouse-ear cress).